Here is a 406-residue protein sequence, read N- to C-terminus: Pyruvate dehydrogenase E1 component subunit beta-3, chloroplastic (406 aa).

The N-terminal 70 residues, methionine 1–lysine 70, are a transit peptide targeting the chloroplast. Thiamine diphosphate is bound at residue glutamate 142. The K(+) site is built by valine 195, alanine 243, isoleucine 244, and asparagine 248.

As to quaternary structure, tetramer of 2 alpha and 2 beta subunits. Thiamine diphosphate is required as a cofactor.

It is found in the plastid. The protein resides in the chloroplast. The enzyme catalyses N(6)-[(R)-lipoyl]-L-lysyl-[protein] + pyruvate + H(+) = N(6)-[(R)-S(8)-acetyldihydrolipoyl]-L-lysyl-[protein] + CO2. In terms of biological role, the pyruvate dehydrogenase complex catalyzes the overall conversion of pyruvate to acetyl-CoA and CO(2). It contains multiple copies of three enzymatic components: pyruvate dehydrogenase (E1), dihydrolipoamide acetyltransferase (E2) and lipoamide dehydrogenase (E3). The protein is Pyruvate dehydrogenase E1 component subunit beta-3, chloroplastic (E1-BETA-2) of Arabidopsis thaliana (Mouse-ear cress).